Consider the following 145-residue polypeptide: Large ribosomal subunit protein uL15 (145 aa).

A disordered region spans residues 20 to 39 (GRVGKHRKHPSGRGNAGGEH).

This sequence belongs to the universal ribosomal protein uL15 family.

The chain is Large ribosomal subunit protein uL15 (RPL27A) from Trypanosoma brucei brucei.